The following is a 501-amino-acid chain: Cytochrome P450 monooxygenase esdpH (501 aa).

A helical transmembrane segment spans residues 5-22; sequence RVGILIIGVLATATFWLC. C446 contributes to the heme binding site.

This sequence belongs to the cytochrome P450 family. Heme serves as cofactor.

The protein localises to the membrane. It participates in secondary metabolite biosynthesis; terpenoid biosynthesis. Cytochrome P450 monooxygenase; part of the cluster that mediates the biosynthesis of shearones, diterpenoid pyrones (DPs) which are structurally diverse meroterpenoids consisting of a diterpene linked by a pyrone, and which may exhibit a range of bioactivities. Whitin the pathway, esdpH takes part in the molecular scaffold modification via the hydroxylation at C-6' and can transform shearone C into shearone E, shearone D into shearone F, and shearone H into shearone I, the latter being the final product of the pathway. The molecular scaffold is commonly biosynthesized by a series of enzymes including the non-reducing polyketide synthase (NR-PKS) esdpA that generates an alpha-pyrone; the prenyltransferase esdpC that attaches a geranylgeranyl pyrophosphate (GGPP) produced by the GGPP synthase (GGPPS) esdpD onto the pyrone unit; the FAD-dependent monooxygenase esdpE that converts an olefin on the diterpene unit into an epoxide; and the terpene cyclase esdpB that catalyzes the cyclization reactions to give the molecular backbone shearone A. In the modification steps, esdpF oxidizes the hydroxy group to a ketone at C-3 and esdpG then attaches hydroxy groups at both C-11 and C-12. After that, esdpI hydroxylates at C-20 and esdpH hydroxylates at C-6'. The ether bridge is generated by nucleophilic attack of the hydroxy group at C-20 to the carbonyl carbon at C-3. EsdpH can also functions prior to esdpI. The different combinations of these modification enzymes lead to the production of diverse shearone derivatives, shearone I being the end product of the pathway. The alpha-ketoglutarate-dependent dioxygenase esdpJ seems not to be involved in this pathway. The chain is Cytochrome P450 monooxygenase esdpH from Penicillium shearii (Eupenicillium shearii).